Consider the following 195-residue polypeptide: FMN-dependent NADH:quinone oxidoreductase (195 aa).

FMN-binding positions include serine 9, 15-17, 85-88, and 129-132; these read SVS, MYNF, and SRGG.

Belongs to the azoreductase type 1 family. As to quaternary structure, homodimer. FMN is required as a cofactor.

The enzyme catalyses 2 a quinone + NADH + H(+) = 2 a 1,4-benzosemiquinone + NAD(+). It carries out the reaction N,N-dimethyl-1,4-phenylenediamine + anthranilate + 2 NAD(+) = 2-(4-dimethylaminophenyl)diazenylbenzoate + 2 NADH + 2 H(+). Quinone reductase that provides resistance to thiol-specific stress caused by electrophilic quinones. Its function is as follows. Also exhibits azoreductase activity. Catalyzes the reductive cleavage of the azo bond in aromatic azo compounds to the corresponding amines. In Stenotrophomonas maltophilia (strain K279a), this protein is FMN-dependent NADH:quinone oxidoreductase.